We begin with the raw amino-acid sequence, 358 residues long: Heme A synthase (358 aa).

A run of 8 helical transmembrane segments spans residues 22-42 (IQVW…VGGA), 107-127 (VLGR…WAIK), 133-153 (VLLQ…VGWW), 172-192 (LAFH…LSQG), 208-228 (FAGW…LVAG), 269-289 (FVHR…AFYV), 302-322 (AFFI…TLLQ), and 324-344 (VPIS…CFSV). Heme is bound at residue histidine 271. Histidine 332 contributes to the heme binding site.

The protein belongs to the COX15/CtaA family. Type 2 subfamily. In terms of assembly, interacts with CtaB. Heme b serves as cofactor.

It localises to the cell membrane. The enzyme catalyses Fe(II)-heme o + 2 A + H2O = Fe(II)-heme a + 2 AH2. The protein operates within porphyrin-containing compound metabolism; heme A biosynthesis; heme A from heme O: step 1/1. In terms of biological role, catalyzes the conversion of heme O to heme A by two successive hydroxylations of the methyl group at C8. The first hydroxylation forms heme I, the second hydroxylation results in an unstable dihydroxymethyl group, which spontaneously dehydrates, resulting in the formyl group of heme A. The sequence is that of Heme A synthase from Bartonella henselae (strain ATCC 49882 / DSM 28221 / CCUG 30454 / Houston 1) (Rochalimaea henselae).